Consider the following 123-residue polypeptide: WAP four-disulfide core domain protein 5 (123 aa).

Residues methionine 1–glycine 24 form the signal peptide. WAP domains are found at residues lysine 27–isoleucine 74 and leucine 75–alanine 121. Intrachain disulfides connect cysteine 34-cysteine 62, cysteine 41-cysteine 66, cysteine 49-cysteine 61, cysteine 55-cysteine 70, cysteine 81-cysteine 109, cysteine 88-cysteine 113, cysteine 96-cysteine 108, and cysteine 102-cysteine 117.

The protein resides in the secreted. In terms of biological role, putative acid-stable proteinase inhibitor. This chain is WAP four-disulfide core domain protein 5 (WFDC5), found in Lemur catta (Ring-tailed lemur).